Reading from the N-terminus, the 232-residue chain is Large ribosomal subunit protein uL1 (232 aa).

Belongs to the universal ribosomal protein uL1 family. As to quaternary structure, part of the 50S ribosomal subunit.

In terms of biological role, binds directly to 23S rRNA. The L1 stalk is quite mobile in the ribosome, and is involved in E site tRNA release. Protein L1 is also a translational repressor protein, it controls the translation of the L11 operon by binding to its mRNA. In Bacillus licheniformis (strain ATCC 14580 / DSM 13 / JCM 2505 / CCUG 7422 / NBRC 12200 / NCIMB 9375 / NCTC 10341 / NRRL NRS-1264 / Gibson 46), this protein is Large ribosomal subunit protein uL1.